Consider the following 201-residue polypeptide: ATP-dependent Clp protease proteolytic subunit (201 aa).

S101 (nucleophile) is an active-site residue. The active site involves H126.

The protein belongs to the peptidase S14 family. As to quaternary structure, component of the chloroplastic Clp protease core complex.

It localises to the plastid. Its subcellular location is the chloroplast stroma. The enzyme catalyses Hydrolysis of proteins to small peptides in the presence of ATP and magnesium. alpha-casein is the usual test substrate. In the absence of ATP, only oligopeptides shorter than five residues are hydrolyzed (such as succinyl-Leu-Tyr-|-NHMec, and Leu-Tyr-Leu-|-Tyr-Trp, in which cleavage of the -Tyr-|-Leu- and -Tyr-|-Trp bonds also occurs).. Functionally, cleaves peptides in various proteins in a process that requires ATP hydrolysis. Has a chymotrypsin-like activity. Plays a major role in the degradation of misfolded proteins. This chain is ATP-dependent Clp protease proteolytic subunit, found in Chlorella vulgaris (Green alga).